The following is a 690-amino-acid chain: Rho guanine nucleotide exchange factor 4 (690 aa).

The interval 73–126 is ABR (APC-binding region) domain; the sequence is KTQRKKLQKQAHVERRLHIGAVHKDGVKCWRKTIITSPESLNLPRRSHPLSQSA. Positions 113 to 145 are disordered; sequence LNLPRRSHPLSQSAPTGLNHMGWPEHTPGTAMP. In terms of domain architecture, SH3 spans 194-253; sequence GSVVCAEALWDHVTMDDQELGFKAGDVIEVMDATNREWWWGRVADGEGWFPASFVRLRVN. The interval 257–282 is disordered; sequence PADDDAPLAGNSGAEDGGAEAQSSKD. The DH domain occupies 284 to 468; it reads MRTNVINEIL…KNVAQLINER (185 aa). Residues 499 to 606 enclose the PH domain; the sequence is ELIYSGELTR…WLKAFARERE (108 aa).

In terms of assembly, isoform 3 interacts with RHOA and RAC1, and (via ABR domain) with APC. Found in a complex consisting of ARHGEF4, APC and CTNNB1. As to expression, expressed at high levels in the brain, skeletal muscle and testis and at low levels in the kidney, lung, small intestine, ovary and prostate. Expression is aberrantly enhanced in most colorectal tumors.

Its subcellular location is the cytoplasm. It is found in the cell projection. It localises to the ruffle membrane. In terms of biological role, acts as a guanine nucleotide exchange factor (GEF) for RHOA, RAC1 and CDC42 GTPases. Binding of APC may activate RAC1 GEF activity. The APC-ARHGEF4 complex seems to be involved in cell migration as well as in E-cadherin-mediated cell-cell adhesion. Required for MMP9 up-regulation via the JNK signaling pathway in colorectal tumor cells. Involved in tumor angiogenesis and may play a role in intestinal adenoma formation and tumor progression. The chain is Rho guanine nucleotide exchange factor 4 (ARHGEF4) from Homo sapiens (Human).